Consider the following 1068-residue polypeptide: MPPRPSSGELWGIHLMPPRILVECLLPNGMIVTLECLREATLITIKHELFKEARKYPLHQLLQDESSYIFVSVTQEAEREEFFDETRRLCDLRLFQPFLKVIEPVGNREEKILNREIGFAIGMPVCEFDMVKDPEVQDFRRNILNVCKEAVDLRDLNSPHSRAMYVYPPNVESSPELPKHIYNKLDKGQIIVVIWVIVSPNNDKQKYTLKINHDCVPEQVIAEAIRKKTRSMLLSSEQLKLCVLEYQGKYILKVCGCDEYFLEKYPLSQYKYIRSCIMLGRMPNLMLMAKESLYSQLPMDCFTMPSYSRRISTATPYMNGETSTKSLWVINSALRIKILCATYVNVNIRDIDKIYVRTGIYHGGEPLCDNVNTQRVPCSNPRWNEWLNYDIYIPDLPRAARLCLSICSVKGRKGAKEEHCPLAWGNINLFDYTDTLVSGKMALNLWPVPHGLEDLLNPIGVTGSNPNKETPCLELEFDWFSSVVKFPDMSVIEEHANWSVSREAGFSYSHAGLSNRLARDNELRENDKEQLKAISTRDPLSEITEQEKDFLWSHRHYCVTIPEILPKLLLSVKWNSRDEVAQMYCLVKDWPPIKPEQAMELLDCNYPDPMVRGFAVRCLEKYLTDDKLSQYLIQLVQVLKYEQYLDNLLVRFLLKKALTNQRIGHFFFWHLKSEMHNKTVSQRFGLLLESYCRACGMYLKHLNRQVEAMEKLINLTDILKQEKKDETQKVQMKFLVEQMRRPDFMDALQGFLSPLNPAHQLGNLRLEECRIMSSAKRPLWLNWENPDIMSELLFQNNEIIFKNGDDLRQDMLTLQIIRIMENIWQNQGLDLRMLPYGCLSIGDCVGLIEVVRNSHTIMQIQCKGGLKGALQFNSHTLHQWLKDKNKGEIYDAAIDLFTRSCAGYCVATFILGIGDRHNSNIMVKDDGQLFHIDFGHFLDHKKKKFGYKRERVPFVLTQDFLIVISKGAQECTKTREFERFQEMCYKAYLAIRQHANLFINLFSMMLGSGMPELQSFDDIAYIRKTLALDKTEQEALEYFMKQMNDAHHGGWTTKMDWIFHTIKQHALN.

One can recognise a PI3K-ABD domain in the interval 16 to 105; sequence MPPRILVECL…QPFLKVIEPV (90 aa). Residues 187–289 enclose the PI3K-RBD domain; that stretch reads KGQIIVVIWV…GRMPNLMLMA (103 aa). The C2 PI3K-type domain maps to 330 to 487; it reads INSALRIKIL…DWFSSVVKFP (158 aa). Positions 517-694 constitute a PIK helical domain; the sequence is LARDNELREN…GLLLESYCRA (178 aa). The PI3K/PI4K catalytic domain maps to 765–1051; it reads RLEECRIMSS…QMNDAHHGGW (287 aa). The segment at 771–777 is G-loop; that stretch reads IMSSAKR. A catalytic loop region spans residues 912–920; sequence GIGDRHNSN. An activation loop region spans residues 931-957; sequence HIDFGHFLDHKKKKFGYKRERVPFVLT.

This sequence belongs to the PI3/PI4-kinase family. In terms of assembly, heterodimer of a catalytic subunit PIK3CA and a p85 regulatory subunit (PIK3R1, PIK3R2 or PIK3R3). Interacts with IRS1 in nuclear extracts. Interacts with RUFY3. Interacts with RASD2. Interacts with APPL1. Interacts with HRAS and KRAS. Interaction with HRAS/KRAS is required for PI3K pathway signaling and cell proliferation stimulated by EGF and FGF2. Interacts with FAM83B; activates the PI3K/AKT signaling cascade.

It carries out the reaction a 1,2-diacyl-sn-glycero-3-phospho-(1D-myo-inositol-4,5-bisphosphate) + ATP = a 1,2-diacyl-sn-glycero-3-phospho-(1D-myo-inositol-3,4,5-trisphosphate) + ADP + H(+). The enzyme catalyses a 1,2-diacyl-sn-glycero-3-phospho-(1D-myo-inositol) + ATP = a 1,2-diacyl-sn-glycero-3-phospho-(1D-myo-inositol-3-phosphate) + ADP + H(+). It catalyses the reaction L-seryl-[protein] + ATP = O-phospho-L-seryl-[protein] + ADP + H(+). The catalysed reaction is 1,2-dioctanoyl-sn-glycero-3-phospho-(1D-myo-inositol-4,5-bisphosphate) + ATP = 1,2-dioctanoyl-sn-glycero-3-phospho-(1D-myo-inositol-3,4,5-trisphosphate) + ADP + H(+). It carries out the reaction 1-octadecanoyl-2-(5Z,8Z,11Z,14Z)-eicosatetraenoyl-sn-glycero-3-phospho-1D-myo-inositol 4,5-bisphosphate + ATP = 1-octadecanoyl-2-(5Z,8Z,11Z,14Z-eicosatetraenoyl)-sn-glycero-3-phospho-(1D-myo-inositol 3,4,5-triphosphate) + ADP + H(+). The protein operates within phospholipid metabolism; phosphatidylinositol phosphate biosynthesis. Phosphoinositide-3-kinase (PI3K) phosphorylates phosphatidylinositol (PI) and its phosphorylated derivatives at position 3 of the inositol ring to produce 3-phosphoinositides. Uses ATP and PtdIns(4,5)P2 (phosphatidylinositol 4,5-bisphosphate) to generate phosphatidylinositol 3,4,5-trisphosphate (PIP3). PIP3 plays a key role by recruiting PH domain-containing proteins to the membrane, including AKT1 and PDPK1, activating signaling cascades involved in cell growth, survival, proliferation, motility and morphology. Participates in cellular signaling in response to various growth factors. Involved in the activation of AKT1 upon stimulation by receptor tyrosine kinases ligands such as EGF, insulin, IGF1, VEGFA and PDGF. Involved in signaling via insulin-receptor substrate (IRS) proteins. Essential in endothelial cell migration during vascular development through VEGFA signaling, possibly by regulating RhoA activity. Required for lymphatic vasculature development, possibly by binding to RAS and by activation by EGF and FGF2, but not by PDGF. Regulates invadopodia formation through the PDPK1-AKT1 pathway. Participates in cardiomyogenesis in embryonic stem cells through a AKT1 pathway. Participates in vasculogenesis in embryonic stem cells through PDK1 and protein kinase C pathway. In addition to its lipid kinase activity, it displays a serine-protein kinase activity that results in the autophosphorylation of the p85alpha regulatory subunit as well as phosphorylation of other proteins such as 4EBP1, H-Ras, the IL-3 beta c receptor and possibly others. Plays a role in the positive regulation of phagocytosis and pinocytosis. This Homo sapiens (Human) protein is Phosphatidylinositol 4,5-bisphosphate 3-kinase catalytic subunit alpha isoform (PIK3CA).